We begin with the raw amino-acid sequence, 443 residues long: Adenylate cyclase (443 aa).

6 consecutive transmembrane segments (helical) span residues 47–69 (VLTI…QLAT), 74–93 (WYIA…VPLL), 98–120 (GLVA…GWDV), 124–143 (AGAQ…LVGI), 148–167 (LAVG…EFLV), and 180–202 (SVSF…WFAL). Over 203–443 (RDTARAEAVM…RGAEPRTAGV (241 aa)) the chain is Cytoplasmic. Positions 251–378 (SVLFADIVGF…DAVNVASRME (128 aa)) constitute a Guanylate cyclase domain. Residues D256 and D300 each contribute to the Mg(2+) site.

Belongs to the adenylyl cyclase class-4/guanylyl cyclase family. In terms of assembly, homodimer. Can also exist as monomer. Mg(2+) serves as cofactor. Requires Mn(2+) as cofactor.

Its subcellular location is the cell membrane. The enzyme catalyses ATP = 3',5'-cyclic AMP + diphosphate. The chain is Adenylate cyclase (cya) from Mycobacterium bovis (strain ATCC BAA-935 / AF2122/97).